The chain runs to 238 residues: Pyridoxine 5'-phosphate synthase (238 aa).

Asparagine 6 is a binding site for 3-amino-2-oxopropyl phosphate. A 1-deoxy-D-xylulose 5-phosphate-binding site is contributed by aspartate 8 to histidine 9. Arginine 17 serves as a coordination point for 3-amino-2-oxopropyl phosphate. Histidine 42 serves as the catalytic Proton acceptor. Positions 44 and 49 each coordinate 1-deoxy-D-xylulose 5-phosphate. Glutamate 69 acts as the Proton acceptor in catalysis. Threonine 99 provides a ligand contact to 1-deoxy-D-xylulose 5-phosphate. Histidine 190 acts as the Proton donor in catalysis. 3-amino-2-oxopropyl phosphate is bound by residues glycine 191 and glycine 212 to histidine 213.

It belongs to the PNP synthase family. As to quaternary structure, homooctamer; tetramer of dimers.

The protein resides in the cytoplasm. It carries out the reaction 3-amino-2-oxopropyl phosphate + 1-deoxy-D-xylulose 5-phosphate = pyridoxine 5'-phosphate + phosphate + 2 H2O + H(+). It functions in the pathway cofactor biosynthesis; pyridoxine 5'-phosphate biosynthesis; pyridoxine 5'-phosphate from D-erythrose 4-phosphate: step 5/5. Catalyzes the complicated ring closure reaction between the two acyclic compounds 1-deoxy-D-xylulose-5-phosphate (DXP) and 3-amino-2-oxopropyl phosphate (1-amino-acetone-3-phosphate or AAP) to form pyridoxine 5'-phosphate (PNP) and inorganic phosphate. The chain is Pyridoxine 5'-phosphate synthase from Chlorobium phaeobacteroides (strain BS1).